The following is a 275-amino-acid chain: Tryptophan synthase alpha chain (275 aa).

Catalysis depends on proton acceptor residues E58 and D69.

The protein belongs to the TrpA family. In terms of assembly, tetramer of two alpha and two beta chains. Ubiquitously expressed at low levels in seedlings, roots, hypocotyls, cotyledons, stems, leaves, inflorescences, flowers, siliques and seeds.

It localises to the cytoplasm. The enzyme catalyses (1S,2R)-1-C-(indol-3-yl)glycerol 3-phosphate + L-serine = D-glyceraldehyde 3-phosphate + L-tryptophan + H2O. It carries out the reaction (1S,2R)-1-C-(indol-3-yl)glycerol 3-phosphate = indole + D-glyceraldehyde 3-phosphate. The protein operates within amino-acid biosynthesis; L-tryptophan biosynthesis; L-tryptophan from chorismate: step 5/5. In terms of biological role, the alpha subunit is responsible for the aldol cleavage of indoleglycerol phosphate to indole and glyceraldehyde 3-phosphate. Contributes to the tryptophan-independent indole biosynthesis, and possibly to auxin production. This Arabidopsis thaliana (Mouse-ear cress) protein is Tryptophan synthase alpha chain (TRPA1).